Reading from the N-terminus, the 584-residue chain is Sensor histidine kinase/phosphatase LytS (584 aa).

6 helical membrane passes run 2-22 (LSLT…AYVL), 42-62 (WQLC…GIVI), 92-112 (VAGL…SGIF), 121-141 (AQVY…FGLQ), 154-174 (SAMI…TFSH), and 186-206 (IALP…SIII). Residues 311-363 (HPNCPLRAAIVIPLEMHGSIVGTLKMYFTNPNDLTFVERQLAEGLANIFSSQI) form the GAF domain. Positions 379-461 (EIKSLQAQVS…RYPGRFNINI (83 aa)) constitute a Histidine kinase domain. Position 390 is a phosphohistidine; by autocatalysis (His390).

Post-translationally, autophosphorylated on His-390.

The protein localises to the cell membrane. It carries out the reaction ATP + protein L-histidine = ADP + protein N-phospho-L-histidine.. In terms of biological role, member of the two-component regulatory system LytR/LytS that regulates genes involved in autolysis, programmed cell death, biofilm formation and cell wall metabolism. Also participates in sensing and responding to host defense cationic antimicrobial peptides (HDPs). Functions as a sensor protein kinase which is autophosphorylated at a histidine residue and transfers its phosphate group to the conserved aspartic acid residue in the regulatory domain of LytR. In turn, LytR binds to the upstream promoter regions of target genes including lrgA and lrgB, to positively regulate their expression. Also possesses a phosphatase activity that dephosphorylates and thus inactivates LytR. The polypeptide is Sensor histidine kinase/phosphatase LytS (lytS) (Staphylococcus aureus (strain USA300)).